Reading from the N-terminus, the 2909-residue chain is Micronemal protein 15 (2909 aa).

A signal peptide spans 1–29 (MVFRATREPFRLPLVAAFIALFLLKGVTC). N-linked (GlcNAc...) asparagine glycans are attached at residues N512, N563, N792, N813, N986, N1007, N1057, N1142, N1319, N1395, and N1713. Residues 1755-1811 (TAIVGEWGEWSACTGTCFSQWWTPKRTRTRLVLAELSHSQIPSVSETATCLDLPPCG) enclose the TSP type-1 1 domain. The tract at residues 1937–2073 (RRKGIMSRRR…RSQARNQTPD (137 aa)) is disordered. Polar residues predominate over residues 1967 to 1977 (SEQSGKASQNG). An N-linked (GlcNAc...) asparagine glycan is attached at N1976. The span at 1978 to 1988 (SRRHRASRKQK) shows a compositional bias: basic residues. A compositionally biased stretch (polar residues) spans 2004 to 2016 (GESTLHGTGTNAY). The segment covering 2049–2065 (KARRARRGAGRFRKSRS) has biased composition (basic residues). The N-linked (GlcNAc...) asparagine glycan is linked to N2333. The TSP type-1 2 domain maps to 2484-2549 (TCDYTEWSEW…EKCDWMPVCP (66 aa)). Intrachain disulfides connect C2485-C2528, C2496-C2500, and C2542-C2548. Positions 2552–2587 (EGEEEDDATGGVEPRGEPIVPPWSPERPTDENNQAM) are disordered. N-linked (GlcNAc...) asparagine glycosylation occurs at N2706. The chain crosses the membrane as a helical span at residues 2709–2729 (TWVICLLLGVGGGICFVLSCV). N2751, N2768, and N2793 each carry an N-linked (GlcNAc...) asparagine glycan. Positions 2759 to 2846 (ESHKLRRQGN…IGQTSPTQQR (88 aa)) are disordered. A compositionally biased stretch (acidic residues) spans 2801 to 2815 (PEEEPWQFEDRDEEP). Positions 2837-2846 (IGQTSPTQQR) are enriched in polar residues.

As to quaternary structure, component of a complex, at least composed of cysteine repeat modular protein A (CRMPa), cysteine repeat modular protein B (CRMPb), micronemal protein 15 (MIC15) and thrombospondin type 1 domain-containing protein (TSP1).

Its subcellular location is the membrane. In terms of biological role, required for rhoptry secretion. Plays a role in host cell invasion. The polypeptide is Micronemal protein 15 (Toxoplasma gondii).